The primary structure comprises 78 residues: Large ribosomal subunit protein bL28 (78 aa).

This sequence belongs to the bacterial ribosomal protein bL28 family.

In Synechococcus sp. (strain ATCC 27144 / PCC 6301 / SAUG 1402/1) (Anacystis nidulans), this protein is Large ribosomal subunit protein bL28.